Consider the following 122-residue polypeptide: Small ribosomal subunit protein uS13c (122 aa).

This sequence belongs to the universal ribosomal protein uS13 family. In terms of assembly, part of the 30S ribosomal subunit.

Its subcellular location is the plastid. It is found in the chloroplast. In terms of biological role, located at the top of the head of the 30S subunit, it contacts several helices of the 16S rRNA. The polypeptide is Small ribosomal subunit protein uS13c (Cyanidium caldarium (Red alga)).